The primary structure comprises 1068 residues: Cytospin-B (1068 aa).

Positions 1-221 (MRSAAKPWNP…VDGTSVSPGD (221 aa)) are disordered. Arg-2 carries N-myristoyl glycine lipidation. A compositionally biased stretch (low complexity) spans 29–40 (SSGMKSSKSSTS). Ser-38 and Ser-55 each carry phosphoserine. Residue Thr-78 is modified to Phosphothreonine. 5 positions are modified to phosphoserine: Ser-112, Ser-131, Ser-134, Ser-137, and Ser-138. Low complexity predominate over residues 126–144 (SNPRKSVSSPTSSNTPTPT). Phosphothreonine is present on Thr-142. Over residues 154 to 200 (PKQENEGGEKAALESQVRELLAEAKAKDSEINRLRSELKKYKEKRTL) the composition is skewed to basic and acidic residues. Residues Ser-218 and Ser-241 each carry the phosphoserine modification. 3 stretches are compositionally biased toward polar residues: residues 261-295 (PNSE…QMSS), 309-323 (LRTS…TKAS), and 337-367 (ETPS…SVSE). The segment at 261–367 (PNSEGAASHT…AGSSPNSVSE (107 aa)) is disordered. Phosphoserine is present on residues Ser-361, Ser-366, Ser-369, and Ser-425. Residues 579 to 773 (EVQEMLKVAR…QKELGDVQGH (195 aa)) adopt a coiled-coil conformation. The tract at residues 777–796 (VTSRAAPPPVDEEPESSEVD) is disordered. Ser-847 and Ser-863 each carry phosphoserine. Disordered regions lie at residues 859–885 (AAAV…TQRL) and 898–922 (GRTE…SRPP). A compositionally biased stretch (polar residues) spans 866-875 (QRHSTYSSVR). Residues 898-909 (GRTETLKPDPHL) are compositionally biased toward basic and acidic residues. Phosphoserine occurs at positions 912 and 914. Residues 912-922 (SPSLESLSRPP) are compositionally biased toward low complexity. The Calponin-homology (CH) domain occupies 962-1067 (GSKRNALLKW…YVAQIYKYFE (106 aa)).

The protein belongs to the cytospin-A family. As to expression, highly expressed in testis. Barely detectable in other tissues. Also highly expressed in some cancer cell lines.

Its subcellular location is the nucleus. It is found in the membrane. This chain is Cytospin-B (SPECC1), found in Homo sapiens (Human).